Consider the following 403-residue polypeptide: D-mannonate dehydratase CC0532 (403 aa).

Asparagine 38 and histidine 123 together coordinate substrate. Tyrosine 160 acts as the Proton donor/acceptor in catalysis. Aspartate 211 is a binding site for Mg(2+). Histidine 213 serves as the catalytic Proton donor/acceptor. Residues glutamate 237 and glutamate 263 each coordinate Mg(2+). The substrate site is built by glutamate 263, arginine 284, histidine 313, aspartate 317, and glutamate 340.

It belongs to the mandelate racemase/muconate lactonizing enzyme family. GalD subfamily. The cofactor is Mg(2+).

It catalyses the reaction D-mannonate = 2-dehydro-3-deoxy-D-gluconate + H2O. It functions in the pathway carbohydrate metabolism; pentose and glucuronate interconversion. In terms of biological role, catalyzes the dehydration of D-mannonate. Has no detectable activity with a panel of 70 other acid sugars (in vitro). The protein is D-mannonate dehydratase CC0532 of Caulobacter vibrioides (strain ATCC 19089 / CIP 103742 / CB 15) (Caulobacter crescentus).